Reading from the N-terminus, the 339-residue chain is Holliday junction branch migration complex subunit RuvB (339 aa).

A large ATPase domain (RuvB-L) region spans residues 1–181; that stretch reads MEERLVSGYE…FGMVHRLEFY (181 aa). ATP-binding positions include leucine 20, arginine 21, glycine 62, lysine 65, threonine 66, threonine 67, 128–130, arginine 171, tyrosine 181, and arginine 218; that span reads EDF. Threonine 66 contributes to the Mg(2+) binding site. Residues 182 to 252 form a small ATPAse domain (RuvB-S) region; sequence SVEELMLIIN…NAKAALDLLE (71 aa). The tract at residues 255–339 is head domain (RuvB-H); that stretch reads ELGLDPTDRL…NKNAGELSLW (85 aa). Positions 310 and 315 each coordinate DNA.

This sequence belongs to the RuvB family. Homohexamer. Forms an RuvA(8)-RuvB(12)-Holliday junction (HJ) complex. HJ DNA is sandwiched between 2 RuvA tetramers; dsDNA enters through RuvA and exits via RuvB. An RuvB hexamer assembles on each DNA strand where it exits the tetramer. Each RuvB hexamer is contacted by two RuvA subunits (via domain III) on 2 adjacent RuvB subunits; this complex drives branch migration. In the full resolvosome a probable DNA-RuvA(4)-RuvB(12)-RuvC(2) complex forms which resolves the HJ.

The protein localises to the cytoplasm. The catalysed reaction is ATP + H2O = ADP + phosphate + H(+). Functionally, the RuvA-RuvB-RuvC complex processes Holliday junction (HJ) DNA during genetic recombination and DNA repair, while the RuvA-RuvB complex plays an important role in the rescue of blocked DNA replication forks via replication fork reversal (RFR). RuvA specifically binds to HJ cruciform DNA, conferring on it an open structure. The RuvB hexamer acts as an ATP-dependent pump, pulling dsDNA into and through the RuvAB complex. RuvB forms 2 homohexamers on either side of HJ DNA bound by 1 or 2 RuvA tetramers; 4 subunits per hexamer contact DNA at a time. Coordinated motions by a converter formed by DNA-disengaged RuvB subunits stimulates ATP hydrolysis and nucleotide exchange. Immobilization of the converter enables RuvB to convert the ATP-contained energy into a lever motion, pulling 2 nucleotides of DNA out of the RuvA tetramer per ATP hydrolyzed, thus driving DNA branch migration. The RuvB motors rotate together with the DNA substrate, which together with the progressing nucleotide cycle form the mechanistic basis for DNA recombination by continuous HJ branch migration. Branch migration allows RuvC to scan DNA until it finds its consensus sequence, where it cleaves and resolves cruciform DNA. This Carboxydothermus hydrogenoformans (strain ATCC BAA-161 / DSM 6008 / Z-2901) protein is Holliday junction branch migration complex subunit RuvB.